Here is a 222-residue protein sequence, read N- to C-terminus: MINTQQLRQEQTEKAQQIILTDQFMAPTYIAGADVGFENSGAVTRAAIVVMHYPSFEIVEYQIARIATLLPYIPGLLSFRECPALLKAWQGIKQKPQLVFVDGQGIAHPRRLGVASHFGLLADIPTIGVAKSRLCGDDKKLDDDVGSTEKLMDKDEQLGWIYRSKKRCKPLYISPGYKVSMESALAWVKRCINGYRLPEPTRWADGIASNRRLFEQLNKNKL.

Positions 34 and 102 each coordinate Mg(2+).

The protein belongs to the endonuclease V family. Requires Mg(2+) as cofactor.

The protein resides in the cytoplasm. The enzyme catalyses Endonucleolytic cleavage at apurinic or apyrimidinic sites to products with a 5'-phosphate.. DNA repair enzyme involved in the repair of deaminated bases. Selectively cleaves double-stranded DNA at the second phosphodiester bond 3' to a deoxyinosine leaving behind the intact lesion on the nicked DNA. This Proteus mirabilis (strain HI4320) protein is Endonuclease V.